The primary structure comprises 345 residues: Galacturonate transporter (345 aa).

Residues 1-32 (MFKIKGLRWYMIGLVTIGTVLGYLTRNAIAAA) form the signal peptide. A run of 8 helical transmembrane segments spans residues 49 to 69 (YIIAAYSACYTIMQPVAGYVL), 76 to 96 (VGYAMFAILWALFCAGTALAN), 100 to 120 (GLAVARGAVGMAEAAMIPAGL), 139 to 159 (FNVGSSIGGMLAPPLVVWAIM), 165 to 185 (MAFLITGALSLVWALCWLYFY), 237 to 257 (FLAEPAWGTFNAWIPLFMFKA), 265 to 285 (IAMFAWMPMLFADLGCILGGY), and 304 to 324 (LVVTLGALLMIGPGTIGLFTS).

It belongs to the major facilitator superfamily. Phthalate permease family.

The protein localises to the cell inner membrane. It carries out the reaction aldehydo-D-galacturonate(out) + H(+)(out) = aldehydo-D-galacturonate(in) + H(+)(in). Inhibited by cyanide and 2,4-dinitrophenol, but not by arsenate. Transport of D-galacturonate. Cannot transport the dimer digalacturonic acid. Uptake is an active process. This Dickeya chrysanthemi (Pectobacterium chrysanthemi) protein is Galacturonate transporter.